Here is a 651-residue protein sequence, read N- to C-terminus: MASATLGSSSSSASPAVAELCQNTPETFLEASKLLLTYADNILRNPSDEKYRSIRIGNTAFSTRLLPVRGAVECLFEMGFEEGETHLIFPKKASVEQLQKIRDLIAIERSSRLDGSSKKVQFSQHPAAAKLPLEQSEDPAGLIRHSGNQTGQLPSLPSAPMVVGDSTILKVLQSNIQHVQLYENPVLQEKALTCIPVSELKRKAQEKLFRARKLDKGTNVSDEDFLLLELLHWFKEEFFRWVNNIVCSKCGGETRSRDEALLPNDDELKWGAKNVENHYCDACQLSNRFPRYNNPEKLLETRCGRCGEWANCFTLCCRALGFEARYVWDYTDHVWTEVYSPSQQRWLHCDACEDVCDKPLLYEIGWGKKLSYIIAFSKDEVVDVTWRYSCKHDEVMSRRTKVKEELLRETINGLNKQRQLSLSESRRKELLQRIIVELVEFISPKTPRPGELGGRVSGSLAWRVARGETGLERKEILFIPSENEKISKQFHLRYDIVRDRYIRVSDNNINISGWENGVWKMESIFRKVEKDWNMVYLARKEGSSFAYISWKFECGSAGLKVDTVSIRTSSQSFESGSVRWKLRSETAQVNLLGDKNLRSYNDFSGATEVTLEAELSRGDGDVAWQHTQLFRQSLNDSGENGLEIIITFNDL.

An N-acetylalanine modification is found at A2. The PUB domain occupies 30 to 91 (EASKLLLTYA…EGETHLIFPK (62 aa)). Zn(2+) contacts are provided by C247, C250, C280, and C283. Catalysis depends on C306, which acts as the Nucleophile. Active-site residues include H333 and D350. The region spanning 451–651 (ELGGRVSGSL…LEIIITFNDL (201 aa)) is the PAW domain.

This sequence belongs to the transglutaminase-like superfamily. PNGase family. In terms of assembly, component of a complex required to couple retrotranslocation, ubiquitination and deglycosylation composed of NGLY1, SAKS1, AMFR, VCP and RAD23B. Interacts with the proteasome components RAD23B and PSMC1. Interacts with directly with VCP. Interacts with DERL1, bringing it close to the endoplasmic reticulum membrane. Interacts with SAKS1. Zn(2+) is required as a cofactor. Ubiquitously expressed with highest level in testis.

The protein resides in the cytoplasm. The enzyme catalyses Hydrolysis of an N(4)-(acetyl-beta-D-glucosaminyl)asparagine residue in which the glucosamine residue may be further glycosylated, to yield a (substituted) N-acetyl-beta-D-glucosaminylamine and a peptide containing an aspartate residue.. With respect to regulation, inhibited by Z-VAD-fmk, a well-known caspase inhibitor, which inhibits enzyme activity through covalent binding of the carbohydrate to the single Cys-306 residue. Functionally, specifically deglycosylates the denatured form of N-linked glycoproteins in the cytoplasm and assists their proteasome-mediated degradation. Cleaves the beta-aspartyl-glucosamine (GlcNAc) of the glycan and the amide side chain of Asn, converting Asn to Asp. Prefers proteins containing high-mannose over those bearing complex type oligosaccharides. Can recognize misfolded proteins in the endoplasmic reticulum that are exported to the cytosol to be destroyed and deglycosylate them, while it has no activity toward native proteins. Deglycosylation is a prerequisite for subsequent proteasome-mediated degradation of some, but not all, misfolded glycoproteins. In Mus musculus (Mouse), this protein is Peptide-N(4)-(N-acetyl-beta-glucosaminyl)asparagine amidase (Ngly1).